A 341-amino-acid polypeptide reads, in one-letter code: ATPase GET3 (341 aa).

34-41 (KGGVGKTT) contributes to the ATP binding site. D63 is an active-site residue. ATP contacts are provided by E245 and N272. Zn(2+) contacts are provided by C283 and C286.

Belongs to the arsA ATPase family. Homodimer.

Its subcellular location is the cytoplasm. The protein resides in the endoplasmic reticulum. In terms of biological role, ATPase required for the post-translational delivery of tail-anchored (TA) proteins to the endoplasmic reticulum. Recognizes and selectively binds the transmembrane domain of TA proteins in the cytosol. This complex then targets to the endoplasmic reticulum by membrane-bound receptors, where the tail-anchored protein is released for insertion. This process is regulated by ATP binding and hydrolysis. ATP binding drives the homodimer towards the closed dimer state, facilitating recognition of newly synthesized TA membrane proteins. ATP hydrolysis is required for insertion. Subsequently, the homodimer reverts towards the open dimer state, lowering its affinity for the membrane-bound receptor, and returning it to the cytosol to initiate a new round of targeting. The protein is ATPase GET3 of Paracoccidioides brasiliensis (strain Pb18).